The chain runs to 352 residues: Nicotinate-nucleotide--dimethylbenzimidazole phosphoribosyltransferase (352 aa).

The Proton acceptor role is filled by glutamate 318.

The protein belongs to the CobT family.

It catalyses the reaction 5,6-dimethylbenzimidazole + nicotinate beta-D-ribonucleotide = alpha-ribazole 5'-phosphate + nicotinate + H(+). It functions in the pathway nucleoside biosynthesis; alpha-ribazole biosynthesis; alpha-ribazole from 5,6-dimethylbenzimidazole: step 1/2. Functionally, catalyzes the synthesis of alpha-ribazole-5'-phosphate from nicotinate mononucleotide (NAMN) and 5,6-dimethylbenzimidazole (DMB). The sequence is that of Nicotinate-nucleotide--dimethylbenzimidazole phosphoribosyltransferase from Dehalococcoides mccartyi (strain ATCC BAA-2100 / JCM 16839 / KCTC 5957 / BAV1).